Here is a 257-residue protein sequence, read N- to C-terminus: Reticulon-like protein B4 (257 aa).

Residues 19–42 (IHGHGDSSSLSDSDDDKKSTSSSS) are disordered. The Reticulon domain occupies 68 to 257 (PADIFLWRNK…PRGALNKKKD (190 aa)). A run of 3 helical transmembrane segments spans residues 78–98 (KVSG…ELFE), 99–119 (YHLL…LFLW), and 173–193 (FILV…YNFL).

In terms of assembly, interacts with VirB2.

The protein localises to the endoplasmic reticulum membrane. Its function is as follows. Plays a role in the Agrobacterium-mediated plant transformation via its interaction with VirB2, the major component of the T-pilus. The polypeptide is Reticulon-like protein B4 (RTNLB4) (Arabidopsis thaliana (Mouse-ear cress)).